Reading from the N-terminus, the 343-residue chain is Tribbles homolog 2 (343 aa).

The tract at residues 25 to 50 (EELSSIRSAEPSQSFSPNLGSPSPPE) is disordered. Residues 29–45 (SIRSAEPSQSFSPNLGS) are compositionally biased toward polar residues. Residues 61–308 (IGKYLLLEPL…SQEILDHPWF (248 aa)) form the Protein kinase domain.

It belongs to the protein kinase superfamily. CAMK Ser/Thr protein kinase family. Tribbles subfamily. In terms of tissue distribution, highly expressed in the thyroid, also present in ovary and cerebrum.

It is found in the cytoplasm. The protein localises to the cytoskeleton. Its function is as follows. Interacts with MAPK kinases and regulates activation of MAP kinases. Does not display kinase activity. This Canis lupus familiaris (Dog) protein is Tribbles homolog 2.